A 388-amino-acid chain; its full sequence is Mannitol-1-phosphate 5-dehydrogenase (388 aa).

Residue 4-15 coordinates NAD(+); sequence AVHFGAGNIGRG.

Belongs to the mannitol dehydrogenase family.

The catalysed reaction is D-mannitol 1-phosphate + NAD(+) = beta-D-fructose 6-phosphate + NADH + H(+). The sequence is that of Mannitol-1-phosphate 5-dehydrogenase from Lactococcus lactis subsp. cremoris (strain MG1363).